The sequence spans 541 residues: Chaperonin GroEL 2 (541 aa).

ATP-binding positions include 29-32, 86-90, Gly413, 476-478, and Asp492; these read TLGP, DGTTT, and NAA.

This sequence belongs to the chaperonin (HSP60) family. Forms a cylinder of 14 subunits composed of two heptameric rings stacked back-to-back. Interacts with the co-chaperonin GroES.

The protein resides in the secreted. The protein localises to the capsule. Its subcellular location is the cell surface. It is found in the cell wall. The enzyme catalyses ATP + H2O + a folded polypeptide = ADP + phosphate + an unfolded polypeptide.. Its function is as follows. Together with its co-chaperonin GroES, plays an essential role in assisting protein folding. The GroEL-GroES system forms a nano-cage that allows encapsulation of the non-native substrate proteins and provides a physical environment optimized to promote and accelerate protein folding. In Mycolicibacterium gilvum (strain PYR-GCK) (Mycobacterium gilvum (strain PYR-GCK)), this protein is Chaperonin GroEL 2.